The following is a 295-amino-acid chain: Small ribosomal subunit protein uS2 (295 aa).

The disordered stretch occupies residues 232–295 (RRRGTDEKPE…DEQPAAAAAE (64 aa)). The segment covering 252-287 (EWERELLEEPKKSDEQPAKSDELPVKTDEQPTKSDE) has biased composition (basic and acidic residues).

The protein belongs to the universal ribosomal protein uS2 family.

This Salinispora tropica (strain ATCC BAA-916 / DSM 44818 / JCM 13857 / NBRC 105044 / CNB-440) protein is Small ribosomal subunit protein uS2.